We begin with the raw amino-acid sequence, 204 residues long: Recombination protein RecR (204 aa).

Residues 61–76 (CARCNTFSETQICSTC) form a C4-type zinc finger. Residues 84 to 183 (SLLCIVETPA…KVTRIARGIP (100 aa)) form the Toprim domain.

It belongs to the RecR family.

Functionally, may play a role in DNA repair. It seems to be involved in an RecBC-independent recombinational process of DNA repair. It may act with RecF and RecO. This Polynucleobacter asymbioticus (strain DSM 18221 / CIP 109841 / QLW-P1DMWA-1) (Polynucleobacter necessarius subsp. asymbioticus) protein is Recombination protein RecR.